A 142-amino-acid polypeptide reads, in one-letter code: Large ribosomal subunit protein uL11 (142 aa).

The protein belongs to the universal ribosomal protein uL11 family. Part of the ribosomal stalk of the 50S ribosomal subunit. Interacts with L10 and the large rRNA to form the base of the stalk. L10 forms an elongated spine to which L12 dimers bind in a sequential fashion forming a multimeric L10(L12)X complex. One or more lysine residues are methylated.

Functionally, forms part of the ribosomal stalk which helps the ribosome interact with GTP-bound translation factors. The sequence is that of Large ribosomal subunit protein uL11 from Mycobacterium leprae (strain Br4923).